The sequence spans 498 residues: Beta-1,3-glucosyltransferase (498 aa).

The Cytoplasmic portion of the chain corresponds to 1–6 (MRPPAC). The helical; Signal-anchor for type II membrane protein transmembrane segment at 7 to 27 (WWLLAPPALLALLTCSLAFGL) threads the bilayer. Residues 28 to 498 (ASEDTKKEVK…ETQKGFREEL (471 aa)) are Lumenal-facing. Residue Asn-336 is glycosylated (N-linked (GlcNAc...) asparagine). The short motif at 495-498 (REEL) is the Prevents secretion from ER element.

It belongs to the glycosyltransferase 31 family. Widely expressed, with highest levels in testis and uterus.

It is found in the endoplasmic reticulum membrane. It participates in protein modification; protein glycosylation. Functionally, O-glucosyltransferase that transfers glucose toward fucose with a beta-1,3 linkage. Specifically glucosylates O-linked fucosylglycan on TSP type-1 domains of proteins, thereby contributing to elongation of O-fucosylglycan. The protein is Beta-1,3-glucosyltransferase of Homo sapiens (Human).